A 430-amino-acid chain; its full sequence is Cyclin-A2 (430 aa).

Position 1 is an N-acetylmethionine (M1). 2 disordered regions span residues 1-80 (MLGS…PIND) and 106-129 (EEIQ…FNSA). The residue at position 5 (S5) is a Phosphoserine. Residues 107-120 (EIQKRPTESKKSES) show a composition bias toward basic and acidic residues.

Belongs to the cyclin family. Cyclin AB subfamily. Interacts with the CDK1 and CDK2 protein kinases to form serine/threonine kinase holoenzyme complexes. Interacts with CDK1 (hyperphosphorylated form in G1 and underphosphorylated forms in S and G2). Interacts with CDK2; the interaction increases from G1 to G2. Interacts (associated with CDK2 but not with CDK1) with SCAPER; regulates the activity of CCNA2/CDK2 by transiently maintaining CCNA2 in the cytoplasm. Forms a ternary complex with CDK2 and CDKN1B; CDKN1B inhibits the kinase activity of CDK2 through conformational rearrangements. Interacts with INCA1. Polyubiquitinated via 'Lys-11'-linked ubiquitin by the anaphase-promoting complex (APC/C), leading to its degradation by the proteasome. Deubiquitinated and stabilized by USP37 enables entry into S phase. Ubiquitinated during the G1 phase by the SCF(FBXO31) complex, leading to its proteasomal degradation.

It is found in the nucleus. The protein localises to the cytoplasm. Its function is as follows. Cyclin which controls both the G1/S and the G2/M transition phases of the cell cycle. Functions through the formation of specific serine/threonine kinase holoenzyme complexes with the cyclin-dependent protein kinases CDK1 and CDK2. The cyclin subunit confers the substrate specificity of these complexes and differentially interacts with and activates CDK1 and CDK2 throughout the cell cycle. The protein is Cyclin-A2 of Bos taurus (Bovine).